We begin with the raw amino-acid sequence, 336 residues long: Opsin-1, short-wave-sensitive 1 (336 aa).

Topologically, residues Met1–Ala29 are extracellular. Asn10 carries an N-linked (GlcNAc...) asparagine glycan. The chain crosses the membrane as a helical span at residues Phe30–Val54. Residues Thr55–Asn66 are Cytoplasmic-facing. Residues Tyr67–Ala91 traverse the membrane as a helical segment. At Ala92–Glu106 the chain is on the extracellular side. A disulfide bridge connects residues Cys103 and Cys180. A helical membrane pass occupies residues Ala107–Phe126. Topologically, residues Glu127–Gln145 are cytoplasmic. A helical transmembrane segment spans residues Ala146–Ser169. The Extracellular portion of the chain corresponds to Arg170 to Ser195. A helical transmembrane segment spans residues Tyr196–Leu223. Topologically, residues Arg224 to Arg245 are cytoplasmic. Residues Met246–Ala269 form a helical membrane-spanning segment. At Asn270–Asp277 the chain is on the extracellular side. The chain crosses the membrane as a helical span at residues Tyr278–Met302. N6-(retinylidene)lysine is present on Lys289. At Asn303–Ala336 the chain is on the cytoplasmic side.

The protein belongs to the G-protein coupled receptor 1 family. Opsin subfamily. Phosphorylated on some or all of the serine and threonine residues present in the C-terminal region. As to expression, retinal short single cones, outer and inner segments.

The protein localises to the membrane. In terms of biological role, visual pigments are the light-absorbing molecules that mediate vision. They consist of an apoprotein, opsin, covalently linked to cis-retinal. This Danio rerio (Zebrafish) protein is Opsin-1, short-wave-sensitive 1 (opn1sw1).